The chain runs to 111 residues: Cytochrome c6 (111 aa).

The signal sequence occupies residues 1-25 (MKRLLSLIFLVFVFFAVMLTPPALA). Positions 39, 42, 43, and 83 each coordinate heme c.

The protein belongs to the cytochrome c family. PetJ subfamily. In terms of assembly, monomer. Binds 1 heme c group covalently per subunit.

The protein localises to the cellular thylakoid lumen. Functionally, functions as an electron carrier between membrane-bound cytochrome b6-f and photosystem I in oxygenic photosynthesis. This Rippkaea orientalis (strain PCC 8801 / RF-1) (Cyanothece sp. (strain PCC 8801)) protein is Cytochrome c6.